A 282-amino-acid chain; its full sequence is NADPH-dependent 7-cyano-7-deazaguanine reductase (282 aa).

Residue Ile88–Ser90 coordinates substrate. Residue Ser90–Lys91 coordinates NADPH. Cys190 serves as the catalytic Thioimide intermediate. Asp197 serves as the catalytic Proton donor. His229–Glu230 provides a ligand contact to substrate. Arg258 to Gly259 serves as a coordination point for NADPH.

Belongs to the GTP cyclohydrolase I family. QueF type 2 subfamily. As to quaternary structure, homodimer.

The protein localises to the cytoplasm. The catalysed reaction is 7-aminomethyl-7-carbaguanine + 2 NADP(+) = 7-cyano-7-deazaguanine + 2 NADPH + 3 H(+). It functions in the pathway tRNA modification; tRNA-queuosine biosynthesis. Functionally, catalyzes the NADPH-dependent reduction of 7-cyano-7-deazaguanine (preQ0) to 7-aminomethyl-7-deazaguanine (preQ1). This Salmonella paratyphi C (strain RKS4594) protein is NADPH-dependent 7-cyano-7-deazaguanine reductase.